Reading from the N-terminus, the 387-residue chain is 2-alkyl-3-oxoalkanoate reductase (387 aa).

Catalysis depends on Y190, which acts as the Proton acceptor. K194 provides a ligand contact to NADP(+).

Belongs to the 3-beta-HSD family.

It catalyses the reaction a (2R,3S)-2-alkyl-3-hydroxyalkanoate + NADP(+) = an (R)-2-alkyl-3-oxoalkanoate + NADPH + H(+). Its function is as follows. Involved in olefin biosynthesis. Catalyzes the reversible stereospecific NADPH-dependent reduction of 2-alkyl-3-oxoalkanoic acids to 2-alkyl-3-hydroxyalkanoic acids. The S.oneidensis oleABCD genes produce 3,6,9,12,15,19,22,25,28-hentriacontanonaene, which may aid the cells in adapting to a sudden drop in temperature. The protein is 2-alkyl-3-oxoalkanoate reductase of Shewanella oneidensis (strain ATCC 700550 / JCM 31522 / CIP 106686 / LMG 19005 / NCIMB 14063 / MR-1).